Consider the following 303-residue polypeptide: Probable alpha-L-glutamate ligase 1 (303 aa).

One can recognise an ATP-grasp domain in the interval 104–287 (LQLLSRKGVG…IAGLIYSFIE (184 aa)). Residues K141, 178-179 (EF), D187, and 211-213 (RSN) each bind ATP. D248, E260, and N262 together coordinate Mg(2+). The Mn(2+) site is built by D248, E260, and N262.

It belongs to the RimK family. It depends on Mg(2+) as a cofactor. The cofactor is Mn(2+).

This Hahella chejuensis (strain KCTC 2396) protein is Probable alpha-L-glutamate ligase 1.